The sequence spans 530 residues: Probable flavin-containing monooxygenase 1 (530 aa).

FAD-binding positions include 17–21, glutamate 38, 46–47, and 58–59; these read GAGVS, VW, and QS. Residue 219–222 participates in NADP(+) binding; it reads SAID.

Belongs to the FMO family. The cofactor is FAD.

In terms of biological role, required for the establishment of systemic acquired resistance (SAR). Not involved in local defense mechanisms. Confers a salicylic acid-dependent (SA) resistance to virulent pathogens such as P.syringae pv tomato and H.parasitica. The polypeptide is Probable flavin-containing monooxygenase 1 (FMO1) (Arabidopsis thaliana (Mouse-ear cress)).